A 429-amino-acid chain; its full sequence is Tol-Pal system protein TolB (429 aa).

The signal sequence occupies residues 1-21; it reads MKPVFKMLLSLLILWTSLLHA.

This sequence belongs to the TolB family. In terms of assembly, the Tol-Pal system is composed of five core proteins: the inner membrane proteins TolA, TolQ and TolR, the periplasmic protein TolB and the outer membrane protein Pal. They form a network linking the inner and outer membranes and the peptidoglycan layer.

The protein resides in the periplasm. Its function is as follows. Part of the Tol-Pal system, which plays a role in outer membrane invagination during cell division and is important for maintaining outer membrane integrity. TolB occupies a key intermediary position in the Tol-Pal system because it communicates directly with both membrane-embedded components, Pal in the outer membrane and TolA in the inner membrane. The protein is Tol-Pal system protein TolB of Hamiltonella defensa subsp. Acyrthosiphon pisum (strain 5AT).